The primary structure comprises 512 residues: Glutathione-binding protein GsiB (512 aa).

An N-terminal signal peptide occupies residues methionine 1–alanine 26.

This sequence belongs to the bacterial solute-binding protein 5 family. As to quaternary structure, the complex is composed of two ATP-binding proteins (GsiA), two transmembrane proteins (GsiC and GsiD) and a solute-binding protein (GsiB).

It is found in the periplasm. Part of the ABC transporter complex GsiABCD involved in glutathione import. Binds glutathione. The chain is Glutathione-binding protein GsiB from Salmonella typhi.